The primary structure comprises 955 residues: MPRRKGLCLFLQMLLLHLYGVCQAQPNYQVFDLLSVSVQRQVTSFLQSALSNPSMNEVYVLSTFKLQPKSTVTLFGLYSTSDNSRFFEFTVMGRLNKASLRYLRSDGKLHSVFFNKLDIADGKQHALLLHLSGLHRGATFAKLYIDCNPTGVVEDLPRPLSGIRLNTGSVHLRTLQKKGQDSMDELKLVMGGTLSEVGAIQECFMQKSEAGQQTGDVSRQLIGQITQMNQMLGELRDVMRQQVKETMFLRNTIAECQACGLGPDFPLPTKVPQRLATTTPPKPRCDATSCFRGVRCIDTEGGFQCGPCPEGYTGNGVICTDVDECRLNPCFLGVRCINTSPGFKCESCPPGYTGSTIQGIGINFAKQNKQVCTDTNECENGRNGGCTSNSLCINTMGSFRCGGCKPGYVGDQIKGCKPEKSCRHGQNPCHASAQCSEEKDGDVTCTCSVGWAGNGYLCGKDTDIDGYPDEALPCPDKNCKKDNCVYVPNSGQEDTDKDNIGDACDEDADGDGILNEQDNCVLAANIDQKNSDQDIFGDACDNCRLTLNNDQRDTDNDGKGDACDDDMDGDGIKNILDNCQRVPNVDQKDKDGDGVGDICDSCPDIINPNQSDIDNDLVGDSCDTNQDSDGDGHQDSTDNCPTVINSNQLDTDKDGIGDECDDDDDNDGIPDTVPPGPDNCKLVPNPGQEDDNNDGVGDVCEADFDQDTVIDRIDVCPENAEITLTDFRAYQTVVLDPEGDAQIDPNWIVLNQGMEIVQTMNSDPGLAVGYTAFNGVDFEGTFHVNTMTDDDYAGFIFGYQDSSSFYVVMWKQTEQTYWQATPFRAVAEPGIQLKAVKSKSGPGEHLRNALWHTGDTNDQVRLLWKDPRNVGWKDKVSYRWFLQHRPQVGYIRARFYEGTELVADSGVTVDTTMRGGRLGVFCFSQENIIWSNLKYRCNDTIPEDFQAFQAQQFSS.

A signal peptide spans 1–24 (MPRRKGLCLFLQMLLLHLYGVCQA). The 168-residue stretch at 25 to 192 (QPNYQVFDLL…MDELKLVMGG (168 aa)) folds into the Laminin G-like domain. In terms of domain architecture, EGF-like 1 spans 281–320 (PKPRCDATSCFRGVRCIDTEGGFQCGPCPEGYTGNGVICT). 21 cysteine pairs are disulfide-bonded: Cys285/Cys296, Cys290/Cys305, Cys308/Cys319, Cys325/Cys336, Cys330/Cys345, Cys348/Cys372, Cys378/Cys392, Cys386/Cys401, Cys404/Cys416, Cys422/Cys435, Cys429/Cys445, Cys447/Cys458, Cys474/Cys479, Cys484/Cys504, Cys520/Cys540, Cys543/Cys563, Cys579/Cys599, Cys602/Cys622, Cys640/Cys660, Cys680/Cys700, and Cys716/Cys937. The EGF-like 2; calcium-binding domain maps to 321 to 358 (DVDECRLNPCFLGVRCINTSPGFKCESCPPGYTGSTIQ). Positions 374-415 (DTNECENGRNGGCTSNSLCINTMGSFRCGGCKPGYVGDQIKG) constitute an EGF-like 3; calcium-binding domain. The region spanning 418 to 459 (PEKSCRHGQNPCHASAQCSEEKDGDVTCTCSVGWAGNGYLCG) is the EGF-like 4 domain. TSP type-3 repeat units lie at residues 460–492 (KDTD…NSGQ), 493–528 (EDTD…NIDQ), 529–551 (KNSD…NNDQ), 552–587 (RDTD…NVDQ), 588–610 (KDKD…NPNQ), 611–648 (SDID…NSNQ), 649–688 (LDTD…NPGQ), and 689–724 (EDDN…EITL). The N-linked (GlcNAc...) asparagine glycan is linked to Asn609. Positions 610–678 (QSDIDNDLVG…IPDTVPPGPD (69 aa)) are disordered. Residues 637–649 (TDNCPTVINSNQL) are compositionally biased toward polar residues. Positions 657–668 (GDECDDDDDNDG) are enriched in acidic residues. A TSP C-terminal domain is found at 728-942 (RAYQTVVLDP…LKYRCNDTIP (215 aa)). An N-linked (GlcNAc...) asparagine glycan is attached at Asn938.

The protein belongs to the thrombospondin family. As to quaternary structure, homotrimer; disulfide-linked.

The protein localises to the endoplasmic reticulum. Its subcellular location is the sarcoplasmic reticulum. It localises to the secreted. The protein resides in the extracellular space. It is found in the extracellular matrix. In terms of biological role, adhesive glycoprotein that mediates cell-to-cell and cell-to-matrix interactions and may be involved in various processes including cellular proliferation, migration, adhesion and attachment. May play a role in ER stress response. May participate in the genesis and function of cardiac and skeletal muscle. In Xenopus laevis (African clawed frog), this protein is Thrombospondin-4 (thbs4).